The sequence spans 247 residues: AA9 family lytic polysaccharide monooxygenase A (247 aa).

A signal peptide spans 1-19 (MVRLASLAVLGSVIATASA). Cu(2+)-binding residues include His20 and His100. Cys60 and Cys185 form a disulfide bridge. Residue His165 participates in O2 binding. A Cu(2+)-binding site is contributed by Tyr182. The N-linked (GlcNAc...) asparagine glycan is linked to Asn193.

The protein belongs to the polysaccharide monooxygenase AA9 family. Requires Cu(2+) as cofactor.

The protein localises to the secreted. It carries out the reaction [(1-&gt;4)-beta-D-glucosyl]n+m + reduced acceptor + O2 = 4-dehydro-beta-D-glucosyl-[(1-&gt;4)-beta-D-glucosyl]n-1 + [(1-&gt;4)-beta-D-glucosyl]m + acceptor + H2O.. Lytic polysaccharide monooxygenase (LPMO) that depolymerizes polysaccharides via the oxidation of scissile alpha- or beta-(1-4)-glycosidic bonds, yielding C4 oxidation products. Catalysis by LPMOs requires the reduction of the active-site copper from Cu(II) to Cu(I) by a reducing agent and H(2)O(2) or O(2) as a cosubstrate. Shows C4-oxidative cleavage of amorphous cellulose and soluble cello-oligosaccharides. Also active on xyloglucan, mixed-linkage beta-glucan, and glucomannan. Not active on crystalline forms of cellulose. Has higher affinity for linear substrates compared to branched substrates. Catalyzes a fast and specific peroxygenase reaction that is at least two orders of magnitude faster than the apparent monooxygenase reaction. This chain is AA9 family lytic polysaccharide monooxygenase A, found in Schizophyllum commune (strain H4-8 / FGSC 9210) (Split gill fungus).